Here is a 733-residue protein sequence, read N- to C-terminus: EF-hand domain-containing family member C2 (733 aa).

3 DM10 domains span residues 61–168, 212–354, and 416–523; these read DKQV…TKIG, DRKV…RTKY, and ISNT…ERNS.

Microtubule inner protein component of sperm flagellar doublet microtubules. As to expression, expressed in trachea multiciliated cells.

It is found in the cytoplasm. Its subcellular location is the cytoskeleton. The protein localises to the cilium axoneme. The protein resides in the flagellum axoneme. Functionally, microtubule inner protein (MIP) part of the dynein-decorated doublet microtubules (DMTs) in cilia axoneme, which is required for motile cilia beating. The chain is EF-hand domain-containing family member C2 (EFHC2) from Bos taurus (Bovine).